The primary structure comprises 100 residues: Integration host factor subunit alpha (100 aa).

This sequence belongs to the bacterial histone-like protein family. Heterodimer of an alpha and a beta chain.

Its function is as follows. This protein is one of the two subunits of integration host factor, a specific DNA-binding protein that functions in genetic recombination as well as in transcriptional and translational control. This Buchnera aphidicola subsp. Schizaphis graminum (strain Sg) protein is Integration host factor subunit alpha.